The sequence spans 227 residues: Enolase-phosphatase E1 (227 aa).

The Mg(2+) site is built by D11 and E13. Substrate is bound by residues 118 to 119 and K161; that span reads SS. D186 contacts Mg(2+).

This sequence belongs to the HAD-like hydrolase superfamily. MasA/MtnC family. As to quaternary structure, monomer. Mg(2+) is required as a cofactor.

It localises to the cytoplasm. The protein resides in the nucleus. The enzyme catalyses 5-methylsulfanyl-2,3-dioxopentyl phosphate + H2O = 1,2-dihydroxy-5-(methylsulfanyl)pent-1-en-3-one + phosphate. It participates in amino-acid biosynthesis; L-methionine biosynthesis via salvage pathway; L-methionine from S-methyl-5-thio-alpha-D-ribose 1-phosphate: step 3/6. It functions in the pathway amino-acid biosynthesis; L-methionine biosynthesis via salvage pathway; L-methionine from S-methyl-5-thio-alpha-D-ribose 1-phosphate: step 4/6. Functionally, bifunctional enzyme that catalyzes the enolization of 2,3-diketo-5-methylthiopentyl-1-phosphate (DK-MTP-1-P) into the intermediate 2-hydroxy-3-keto-5-methylthiopentenyl-1-phosphate (HK-MTPenyl-1-P), which is then dephosphorylated to form the acireductone 1,2-dihydroxy-3-keto-5-methylthiopentene (DHK-MTPene). The chain is Enolase-phosphatase E1 from Saccharomyces cerevisiae (strain RM11-1a) (Baker's yeast).